We begin with the raw amino-acid sequence, 446 residues long: Probable 1,4-beta-D-glucan cellobiohydrolase A (446 aa).

Positions M1–A17 are cleaved as a signal peptide. N81 carries an N-linked (GlcNAc...) asparagine glycan. E226 functions as the Nucleophile in the catalytic mechanism. The Proton donor role is filled by E231. N-linked (GlcNAc...) asparagine glycans are attached at residues N284 and N333. The disordered stretch occupies residues T399 to P420.

Belongs to the glycosyl hydrolase 7 (cellulase C) family.

It localises to the secreted. The enzyme catalyses Hydrolysis of (1-&gt;4)-beta-D-glucosidic linkages in cellulose and cellotetraose, releasing cellobiose from the non-reducing ends of the chains.. Functionally, the biological conversion of cellulose to glucose generally requires three types of hydrolytic enzymes: (1) Endoglucanases which cut internal beta-1,4-glucosidic bonds; (2) Exocellobiohydrolases that cut the disaccharide cellobiose from the non-reducing end of the cellulose polymer chain; (3) Beta-1,4-glucosidases which hydrolyze the cellobiose and other short cello-oligosaccharides to glucose. This is Probable 1,4-beta-D-glucan cellobiohydrolase A (cbhA) from Emericella nidulans (strain FGSC A4 / ATCC 38163 / CBS 112.46 / NRRL 194 / M139) (Aspergillus nidulans).